Reading from the N-terminus, the 184-residue chain is ATP synthase subunit b, chloroplastic (184 aa).

Residues 4 to 24 (IINLVIFSGYWPIAGNFGLNT) form a helical membrane-spanning segment.

The protein belongs to the ATPase B chain family. F-type ATPases have 2 components, F(1) - the catalytic core - and F(0) - the membrane proton channel. F(1) has five subunits: alpha(3), beta(3), gamma(1), delta(1), epsilon(1). F(0) has four main subunits: a(1), b(1), b'(1) and c(10-14). The alpha and beta chains form an alternating ring which encloses part of the gamma chain. F(1) is attached to F(0) by a central stalk formed by the gamma and epsilon chains, while a peripheral stalk is formed by the delta, b and b' chains.

The protein resides in the plastid. The protein localises to the chloroplast thylakoid membrane. Functionally, f(1)F(0) ATP synthase produces ATP from ADP in the presence of a proton or sodium gradient. F-type ATPases consist of two structural domains, F(1) containing the extramembraneous catalytic core and F(0) containing the membrane proton channel, linked together by a central stalk and a peripheral stalk. During catalysis, ATP synthesis in the catalytic domain of F(1) is coupled via a rotary mechanism of the central stalk subunits to proton translocation. Component of the F(0) channel, it forms part of the peripheral stalk, linking F(1) to F(0). The protein is ATP synthase subunit b, chloroplastic of Physcomitrium patens (Spreading-leaved earth moss).